The primary structure comprises 88 residues: Small ribosomal subunit protein bS16c (88 aa).

This sequence belongs to the bacterial ribosomal protein bS16 family.

The protein localises to the plastid. It is found in the chloroplast. In Citrus sinensis (Sweet orange), this protein is Small ribosomal subunit protein bS16c.